We begin with the raw amino-acid sequence, 675 residues long: Methionine--tRNA ligase (675 aa).

The 'HIGH' region signature appears at 15–25; that stretch reads PYANGSIHLGH. The Zn(2+) site is built by cysteine 146, cysteine 149, cysteine 159, and cysteine 162. The 'KMSKS' region signature appears at 332–336; that stretch reads KMSKS. Lysine 335 provides a ligand contact to ATP. The tRNA-binding domain occupies 573–675; the sequence is DFAKVDMRIA…SGAQPGMQVK (103 aa).

The protein belongs to the class-I aminoacyl-tRNA synthetase family. MetG type 1 subfamily. In terms of assembly, homodimer. Zn(2+) serves as cofactor.

Its subcellular location is the cytoplasm. It catalyses the reaction tRNA(Met) + L-methionine + ATP = L-methionyl-tRNA(Met) + AMP + diphosphate. Is required not only for elongation of protein synthesis but also for the initiation of all mRNA translation through initiator tRNA(fMet) aminoacylation. This Serratia proteamaculans (strain 568) protein is Methionine--tRNA ligase.